The chain runs to 292 residues: Hydroxysqualene synthase (292 aa).

This sequence belongs to the phytoene/squalene synthase family. HpnC subfamily.

It carries out the reaction presqualene diphosphate + H2O = hydroxysqualene + diphosphate. It participates in secondary metabolite biosynthesis; hopanoid biosynthesis. Functionally, involved in the biosynthesis of the hopanoid precursor squalene (SQ) from farnesyl diphosphate (FPP). Catalyzes the second step, the conversion of presqualene diphosphate (PSPP) to hydroxysqualene (HSQ). The protein is Hydroxysqualene synthase of Rhodopseudomonas palustris (strain ATCC BAA-98 / CGA009).